The primary structure comprises 155 residues: Ribosome maturation factor RimP (155 aa).

Belongs to the RimP family.

The protein resides in the cytoplasm. Required for maturation of 30S ribosomal subunits. The chain is Ribosome maturation factor RimP from Staphylococcus aureus (strain bovine RF122 / ET3-1).